A 98-amino-acid polypeptide reads, in one-letter code: MPGITREEVAHLARLARLELKGEELDHFAGQLDDIIGAVARVSEVADQDVPPTSHPLPLTNVMRADEVRPSLTPAQALSGAPAQEQQRFKVPQILGED.

Residues 75–98 (AQALSGAPAQEQQRFKVPQILGED) form a disordered region.

The protein belongs to the GatC family. Heterotrimer of A, B and C subunits.

It carries out the reaction L-glutamyl-tRNA(Gln) + L-glutamine + ATP + H2O = L-glutaminyl-tRNA(Gln) + L-glutamate + ADP + phosphate + H(+). The catalysed reaction is L-aspartyl-tRNA(Asn) + L-glutamine + ATP + H2O = L-asparaginyl-tRNA(Asn) + L-glutamate + ADP + phosphate + 2 H(+). Allows the formation of correctly charged Asn-tRNA(Asn) or Gln-tRNA(Gln) through the transamidation of misacylated Asp-tRNA(Asn) or Glu-tRNA(Gln) in organisms which lack either or both of asparaginyl-tRNA or glutaminyl-tRNA synthetases. The reaction takes place in the presence of glutamine and ATP through an activated phospho-Asp-tRNA(Asn) or phospho-Glu-tRNA(Gln). This is Aspartyl/glutamyl-tRNA(Asn/Gln) amidotransferase subunit C from Streptomyces griseus subsp. griseus (strain JCM 4626 / CBS 651.72 / NBRC 13350 / KCC S-0626 / ISP 5235).